We begin with the raw amino-acid sequence, 461 residues long: Photosystem II CP43 reaction center protein (461 aa).

Topologically, residues 1–48 are cytoplasmic; sequence MVTLSSNSIFATNRDQESSGFAWWAGNARLINLSGKLLGAHVAHAGLI. Residues 49–71 form a helical membrane-spanning segment; that stretch reads VFWAGAMTLFELAHFIPEKPMYE. Residues 72-111 are Lumenal-facing; that stretch reads QGLILIPHIATLGWGVGPGGEVVDTFPFFVVGVVHLISSA. A helical membrane pass occupies residues 112 to 133; the sequence is VLGFGGVYHAIRGPETLEEYSS. The Cytoplasmic portion of the chain corresponds to 134 to 155; the sequence is FFGYDWKDKNKMTTILGFHLIV. Residues 156–178 traverse the membrane as a helical segment; that stretch reads LGIGALLLVAKAMFFGGLYDTWA. Residues 179–232 lie on the Lumenal side of the membrane; the sequence is PGGGDVRVITNPTLDPRVIFGYLLKSPFGGEGWIVSVNNLEDVVGGHIWIGLIC. A helical transmembrane segment spans residues 233–253; the sequence is IAGGIWHILTTPFGWARRAFI. Over 254–268 the chain is Cytoplasmic; that stretch reads WSGEAYLSYSLGALS. The helical transmembrane segment at 269–289 threads the bilayer; it reads MMGFIATCFVWFNNTVYPSEF. Residues 290-424 lie on the Lumenal side of the membrane; sequence YGPTGPEASQ…ATSHFVLAFF (135 aa). Glu355 lines the [CaMn4O5] cluster pocket. Residues 425-449 form a helical membrane-spanning segment; sequence FLVGHLWHAGRARAAAAGFEKGIDR. Over 450-461 the chain is Cytoplasmic; that stretch reads ESEPVLSMPSLD.

In terms of assembly, PSII is composed of 1 copy each of membrane proteins PsbA, PsbB, PsbC, PsbD, PsbE, PsbF, PsbH, PsbI, PsbJ, PsbK, PsbL, PsbM, PsbT, PsbX, PsbY, PsbZ, Psb30/Ycf12, peripheral proteins PsbO, CyanoQ (PsbQ), PsbU, PsbV and a large number of cofactors. It forms dimeric complexes. Part of a photosystem II (PSII) assembly intermediate complex PSII-I; crystallized from a strain deleted of psbJ, it forms monomeric PSII before addition of the oxygen evolving complex. PSII-I includes 3 assembly factors not found in mature PSII (Psb27, Psb28 and Psb34), and CP43 (this protein) is not in its mature conformation. Requires Binds multiple chlorophylls and provides some of the ligands for the Ca-4Mn-5O cluster of the oxygen-evolving complex. It may also provide a ligand for a Cl- that is required for oxygen evolution. PSII binds additional chlorophylls, carotenoids and specific lipids. as cofactor.

Its subcellular location is the cellular thylakoid membrane. Its function is as follows. One of the components of the core complex of photosystem II (PSII). It binds chlorophyll and helps catalyze the primary light-induced photochemical processes of PSII. PSII is a light-driven water:plastoquinone oxidoreductase, using light energy to abstract electrons from H(2)O, generating O(2) and a proton gradient subsequently used for ATP formation. This chain is Photosystem II CP43 reaction center protein, found in Thermosynechococcus vestitus (strain NIES-2133 / IAM M-273 / BP-1).